The sequence spans 337 residues: tRNA N6-adenosine threonylcarbamoyltransferase (337 aa).

Residues H111 and H115 each coordinate Fe cation. Substrate contacts are provided by residues 134-138 (LVSGG), D167, G180, and N272. D300 contacts Fe cation.

Belongs to the KAE1 / TsaD family. Fe(2+) is required as a cofactor.

The protein localises to the cytoplasm. It catalyses the reaction L-threonylcarbamoyladenylate + adenosine(37) in tRNA = N(6)-L-threonylcarbamoyladenosine(37) in tRNA + AMP + H(+). Functionally, required for the formation of a threonylcarbamoyl group on adenosine at position 37 (t(6)A37) in tRNAs that read codons beginning with adenine. Is involved in the transfer of the threonylcarbamoyl moiety of threonylcarbamoyl-AMP (TC-AMP) to the N6 group of A37, together with TsaE and TsaB. TsaD likely plays a direct catalytic role in this reaction. This Salmonella newport (strain SL254) protein is tRNA N6-adenosine threonylcarbamoyltransferase.